Consider the following 255-residue polypeptide: GTP cyclohydrolase FolE2 (255 aa).

It belongs to the GTP cyclohydrolase IV family.

The enzyme catalyses GTP + H2O = 7,8-dihydroneopterin 3'-triphosphate + formate + H(+). Its pathway is cofactor biosynthesis; 7,8-dihydroneopterin triphosphate biosynthesis; 7,8-dihydroneopterin triphosphate from GTP: step 1/1. Its function is as follows. Converts GTP to 7,8-dihydroneopterin triphosphate. This Syntrophus aciditrophicus (strain SB) protein is GTP cyclohydrolase FolE2.